Here is an 859-residue protein sequence, read N- to C-terminus: Rab effector MyRIP (859 aa).

Positions Lys4–Asn124 constitute a RabBD domain. The FYVE-type zinc-finger motif lies at Cys63–Cys105. Residues Arg143–Leu560 are myosin-binding. The tract at residues Val193–Ala209 is PKA-binding. The tract at residues Leu232 to Gln248 is negative regulation of PKA-binding. The tract at residues Lys251–Arg285 is disordered. Residue Ser298 is modified to Phosphoserine. Disordered regions lie at residues Glu302–Ser374, Val386–Val629, and Asp783–Lys812. The segment covering Gln316–Ala326 has biased composition (basic and acidic residues). Ser350 is modified (phosphoserine). Residues Met393–Trp403 are compositionally biased toward acidic residues. Low complexity predominate over residues Pro435–Ala450. Basic and acidic residues-rich tracts occupy residues Ala484–Leu494 and Ser607–Lys617. Residues Asp495–Ala856 form an actin-binding region. Polar residues-rich tracts occupy residues Glu618 to Val629 and Arg787 to Ser796.

As to quaternary structure, binds MYO5A, MYO7A and F-actin. Binds RAB27A that has been activated by GTP-binding via its N-terminus. Interacts with PRKAR2A. Interacts with components of the exocyst complex, including EXOC3 and EXOC4. Detected in brain, skin, heart, adrenal medulla, pancreas, intestine, liver, kidney, muscle and testis.

Its subcellular location is the cytoplasm. It localises to the perinuclear region. The protein resides in the cytoplasmic vesicle. The protein localises to the secretory vesicle. Its function is as follows. Rab effector protein involved in melanosome transport. Serves as link between melanosome-bound RAB27A and the motor proteins MYO5A and MYO7A. May link RAB27A-containing vesicles to actin filaments. Functions as a protein kinase A-anchoring protein (AKAP). May act as a scaffolding protein that links PKA to components of the exocytosis machinery, thus facilitating exocytosis, including insulin release. The sequence is that of Rab effector MyRIP (MYRIP) from Homo sapiens (Human).